A 365-amino-acid chain; its full sequence is DNA replication and repair protein RecF (365 aa).

Residue 30 to 37 (GANGQGKT) coordinates ATP.

It belongs to the RecF family.

Its subcellular location is the cytoplasm. Functionally, the RecF protein is involved in DNA metabolism; it is required for DNA replication and normal SOS inducibility. RecF binds preferentially to single-stranded, linear DNA. It also seems to bind ATP. In Geobacter sulfurreducens (strain ATCC 51573 / DSM 12127 / PCA), this protein is DNA replication and repair protein RecF.